Reading from the N-terminus, the 66-residue chain is Large ribosomal subunit protein bL33c (66 aa).

The protein belongs to the bacterial ribosomal protein bL33 family.

It is found in the plastid. The protein resides in the chloroplast. This chain is Large ribosomal subunit protein bL33c, found in Angiopteris evecta (Mule's foot fern).